Consider the following 226-residue polypeptide: UPF0758 protein SPT_1135 (226 aa).

An MPN domain is found at 103-225; sequence SILSSQKLAK…YFSYREKTDL (123 aa). Zn(2+) is bound by residues His-174, His-176, and Asp-187. A JAMM motif motif is present at residues 174 to 187; sequence HNHPSGAVAPSQND.

The protein belongs to the UPF0758 family.

The sequence is that of UPF0758 protein SPT_1135 from Streptococcus pneumoniae (strain Taiwan19F-14).